The chain runs to 295 residues: Sulfotransferase 1A1 (295 aa).

Residue 48-53 (KSGTTW) coordinates 3'-phosphoadenylyl sulfate. Position 106–108 (106–108 (KTH)) interacts with substrate. The active-site Proton acceptor is H108. Residues R130, S138, Y193, 227–232 (TSFKEM), and 255–259 (FMRKG) each bind 3'-phosphoadenylyl sulfate. Phosphoserine is present on S138.

The protein belongs to the sulfotransferase 1 family. As to quaternary structure, homodimer. In terms of tissue distribution, ubiquitously expressed in canine tissues with highest expression in male and female liver.

The protein localises to the cytoplasm. The enzyme catalyses a phenol + 3'-phosphoadenylyl sulfate = an aryl sulfate + adenosine 3',5'-bisphosphate + H(+). It catalyses the reaction 17beta-estradiol + 3'-phosphoadenylyl sulfate = 17beta-estradiol 3-sulfate + adenosine 3',5'-bisphosphate + H(+). The catalysed reaction is 4-ethylphenol + 3'-phosphoadenylyl sulfate = 4-ethylphenyl sulfate + adenosine 3',5'-bisphosphate + H(+). It carries out the reaction 4-nitrophenol + 3'-phosphoadenylyl sulfate = 4-nitrophenyl sulfate + adenosine 3',5'-bisphosphate. The enzyme catalyses dopamine + 3'-phosphoadenylyl sulfate = dopamine 3-O-sulfate + adenosine 3',5'-bisphosphate + H(+). It catalyses the reaction dopamine + 3'-phosphoadenylyl sulfate = dopamine 4-O-sulfate + adenosine 3',5'-bisphosphate + H(+). The catalysed reaction is 3,3',5-triiodo-L-thyronine + 3'-phosphoadenylyl sulfate = 3,3',5-triiodo-L-thyronine sulfate + adenosine 3',5'-bisphosphate + H(+). It carries out the reaction 3,3',5'-triiodo-L-thyronine + 3'-phosphoadenylyl sulfate = 3,3',5'-triiodo-L-thyronine sulfate + adenosine 3',5'-bisphosphate + H(+). The enzyme catalyses 3,3'-diiodo-L-thyronine + 3'-phosphoadenylyl sulfate = 3,3'-diiodo-L-thyronine sulfate + adenosine 3',5'-bisphosphate + H(+). It catalyses the reaction L-thyroxine + 3'-phosphoadenylyl sulfate = L-thyroxine sulfate + adenosine 3',5'-bisphosphate + H(+). Functionally, sulfotransferase that utilizes 3'-phospho-5'-adenylyl sulfate (PAPS) as sulfonate donor to catalyze the sulfate conjugation of a wide variety of acceptor molecules bearing a hydroxyl or an amine group. Sulfonation increases the water solubility of most compounds, and therefore their renal excretion, but it can also result in bioactivation to form active metabolites. Displays broad substrate specificity for small phenolic compounds. Plays an important role in the sulfonation of endogenous molecules such as steroid hormones. Mediates also the metabolic activation of carcinogenic N-hydroxyarylamines leading to highly reactive intermediates capable of forming DNA adducts, potentially resulting in mutagenesis. May play a role in gut microbiota-host metabolic interaction. O-sulfonates 4-ethylphenol (4-EP), a dietary tyrosine-derived metabolite produced by gut bacteria. The product 4-EPS crosses the blood-brain barrier and may negatively regulate oligodendrocyte maturation and myelination, affecting the functional connectivity of different brain regions associated with the limbic system. Catalyzes the sulfate conjugation of dopamine. Catalyzes the sulfation of T4 (L-thyroxine/3,5,3',5'-tetraiodothyronine), T3 (3,5,3'-triiodothyronine), rT3 (3,3',5'-triiodothyronine) and 3,3'-T2 (3,3'-diiodothyronine), with a substrate preference of 3,3'-T2 &gt; rT3 &gt; T3 &gt; T4. The protein is Sulfotransferase 1A1 (SULT1A1) of Canis lupus familiaris (Dog).